A 601-amino-acid chain; its full sequence is Elongation factor 4 (601 aa).

The tr-type G domain maps to 5 to 187 (ENIRNFCIIA…AIVHHLPAPK (183 aa)). GTP is bound by residues 17 to 22 (DHGKST) and 134 to 137 (NKID).

It belongs to the TRAFAC class translation factor GTPase superfamily. Classic translation factor GTPase family. LepA subfamily.

The protein localises to the cell inner membrane. The catalysed reaction is GTP + H2O = GDP + phosphate + H(+). Functionally, required for accurate and efficient protein synthesis under certain stress conditions. May act as a fidelity factor of the translation reaction, by catalyzing a one-codon backward translocation of tRNAs on improperly translocated ribosomes. Back-translocation proceeds from a post-translocation (POST) complex to a pre-translocation (PRE) complex, thus giving elongation factor G a second chance to translocate the tRNAs correctly. Binds to ribosomes in a GTP-dependent manner. The chain is Elongation factor 4 from Desulfovibrio desulfuricans (strain ATCC 27774 / DSM 6949 / MB).